The following is a 280-amino-acid chain: uncharacterized protein (280 aa).

Residues 96 to 208 enclose the DUF1279 domain; that stretch reads DKSIGIFQRF…GYLSTPPPVK (113 aa). The helical transmembrane segment at 115 to 135 threads the bilayer; the sequence is VMVPVHIVTSTVWFGSFYYAA. Residues 207–274 adopt a coiled-coil conformation; sequence VKEFLQDKME…KLQETKDKMS (68 aa). The tract at residues 245 to 280 is disordered; it reads SERMEETKERFSETKDKFSEKLQETKDKMSFRKKAD.

The protein resides in the membrane. This is an uncharacterized protein from Danio rerio (Zebrafish).